Here is an 83-residue protein sequence, read N- to C-terminus: Acid shock protein (83 aa).

Residues Met1–Ala21 form the signal peptide. Residues Ala22–Thr40 show a composition bias toward low complexity. A propeptide spanning residues Ala22–Gln56 is cleaved from the precursor. Positions Ala22–Ala83 are disordered. The span at Ala57–Pro70 shows a compositional bias: basic residues. A compositionally biased stretch (low complexity) spans Ala71 to Ala83.

It belongs to the Asr family. Post-translationally, proteolytic processing gives rise to the active protein.

It is found in the periplasm. In terms of biological role, required for growth and/or survival at acidic conditions. This Salmonella heidelberg (strain SL476) protein is Acid shock protein.